Consider the following 198-residue polypeptide: Sulfite reductase, dissimilatory-type subunit alpha (198 aa).

The [4Fe-4S] cluster site is built by Cys-45, Cys-64, Cys-67, and Cys-70. Residues 55 to 83 form the 4Fe-4S ferredoxin-type domain; it reads GTLSIDNKNCTRCMHCINTMPRALKIGDE.

Heterohexamer of two alpha, two beta and two gamma subunits.

Part of the complex that catalyzes the reduction of sulfite to sulfide. The alpha and beta subunits may have arisen by gene duplication. They both bind 2 iron-sulfur clusters, but the alpha subunit seems to be catalytically inactive, due to substitutions along the putative substrate access channel, and because it binds sirohydrochlorin (the dematallated form of siroheme) instead of siroheme. This Megalodesulfovibrio gigas (strain ATCC 19364 / DSM 1382 / NCIMB 9332 / VKM B-1759) (Desulfovibrio gigas) protein is Sulfite reductase, dissimilatory-type subunit alpha (dsrA).